Consider the following 208-residue polypeptide: Large ribosomal subunit protein bL25 (208 aa).

Low complexity predominate over residues proline 186–alanine 201. The disordered stretch occupies residues proline 186–alanine 208.

Belongs to the bacterial ribosomal protein bL25 family. CTC subfamily. As to quaternary structure, part of the 50S ribosomal subunit; part of the 5S rRNA/L5/L18/L25 subcomplex. Contacts the 5S rRNA. Binds to the 5S rRNA independently of L5 and L18.

This is one of the proteins that binds to the 5S RNA in the ribosome where it forms part of the central protuberance. In Ralstonia pickettii (strain 12J), this protein is Large ribosomal subunit protein bL25.